The sequence spans 485 residues: Aldehyde dehydrogenase family 3 member A2 (485 aa).

The Cytoplasmic portion of the chain corresponds to M1 to K463. G185–G190 is a binding site for NAD(+). Catalysis depends on residues E207 and C241. S293 is subject to Phosphoserine. The chain crosses the membrane as a helical span at residues L464–Y484. Positions K481–Y484 match the Prevents secretion from ER motif.

Belongs to the aldehyde dehydrogenase family. As to quaternary structure, homodimer.

It is found in the microsome membrane. The protein resides in the endoplasmic reticulum membrane. It catalyses the reaction an aldehyde + NAD(+) + H2O = a carboxylate + NADH + 2 H(+). The enzyme catalyses a fatty aldehyde + NAD(+) + H2O = a fatty acid + NADH + 2 H(+). It carries out the reaction (2E)-hexadecenal + NAD(+) + H2O = (E)-hexadec-2-enoate + NADH + 2 H(+). The catalysed reaction is hexadecanoate + NADH + 2 H(+) = hexadecanal + NAD(+) + H2O. It catalyses the reaction 22-oxodocosanoate + NAD(+) + H2O = docosanedioate + NADH + 2 H(+). The enzyme catalyses 2,6,10,14-tetramethylpentadecanal + NAD(+) + H2O = 2,6,10,14-tetramethylpentadecanoate + NADH + 2 H(+). It carries out the reaction octadecanal + NAD(+) + H2O = octadecanoate + NADH + 2 H(+). The catalysed reaction is dodecanoate + NADH + 2 H(+) = dodecanal + NAD(+) + H2O. It catalyses the reaction decanal + NAD(+) + H2O = decanoate + NADH + 2 H(+). The enzyme catalyses tetradecanal + NAD(+) + H2O = tetradecanoate + NADH + 2 H(+). It carries out the reaction octanal + NAD(+) + H2O = octanoate + NADH + 2 H(+). The catalysed reaction is heptanal + NAD(+) + H2O = heptanoate + NADH + 2 H(+). It catalyses the reaction (2E,6E)-farnesal + NAD(+) + H2O = (2E,6E)-farnesoate + NADH + 2 H(+). Functionally, catalyzes the oxidation of medium and long-chain aliphatic aldehydes to fatty acids. Active on a variety of saturated and unsaturated aliphatic aldehydes between 6 and 24 carbons in length. Responsible for conversion of the sphingosine 1-phosphate (S1P) degradation product hexadecenal to hexadecenoic acid. The polypeptide is Aldehyde dehydrogenase family 3 member A2 (ALDH3A2) (Pongo abelii (Sumatran orangutan)).